The chain runs to 565 residues: Deformed epidermal autoregulatory factor 1 homolog (565 aa).

Disordered stretches follow at residues Gly34–Arg62 and Gly162–Thr190. A compositionally biased stretch (pro residues) spans Pro169 to Leu181. The residue at position 171 (Thr171) is a Phosphothreonine. Residue Ser176 is modified to Phosphoserine. Residue Thr179 is modified to Phosphothreonine. The SAND domain maps to Asn193–Asn273. Residues Lys301–Lys316 carry the Nuclear localization signal motif. Positions Ile403–Lys478 are interaction with LMO4. The residue at position 432 (Thr432) is a Phosphothreonine. The residue at position 448 (Ser448) is a Phosphoserine. Zn(2+)-binding residues include Cys504, Cys507, Cys515, Cys518, Cys524, Cys528, His536, and Cys540. Residues Cys504–Cys540 form an MYND-type zinc finger.

Homodimer. Interacts with LMO4; LMO4 blocks export from nucleus. Interacts with LMO2 and CLIM2. May interact with the corepressors NCOR1 and NCRO2. Identified in a complex with XRCC5 and XRCC6. Interacts (via the SAND domain) with the DNA-PK complex subunit XRCC6; the interaction is direct and may be inhibited by DNA-binding. Post-translationally, may be phosphorylated by DNA-PK complex in a DNA independent manner (in vitro).

The protein resides in the nucleus. Its function is as follows. Transcription factor that binds to sequence with multiple copies of 5'-TTC[CG]G-3' present in its own promoter and that of the HNRPA2B1 gene. Down-regulates transcription of these genes. Binds to the retinoic acid response element (RARE) 5'-AGGGTTCACCGAAAGTTCA-3'. Activates the proenkephalin gene independently of promoter binding, probably through protein-protein interaction. Regulates epithelial cell proliferation and side-branching in the mammary gland. Required for neural tube closure and skeletal patterning. Controls the expression of peripheral tissue antigens in pancreatic lymph nodes. Transcriptional activator of EIF4G3. May also involved in behavior. The sequence is that of Deformed epidermal autoregulatory factor 1 homolog (DEAF1) from Pan troglodytes (Chimpanzee).